The chain runs to 465 residues: tRNA modification GTPase MnmE (465 aa).

3 residues coordinate (6S)-5-formyl-5,6,7,8-tetrahydrofolate: Arg25, Glu87, and Arg126. Residues 222-386 (TIRVVLRGLP…LIERLVQFAE (165 aa)) form the TrmE-type G domain. Residues 232-237 (NAGKSR), 251-257 (TDQAGTT), and 276-279 (DTAG) each bind GTP. 2 residues coordinate Mg(2+): Ser236 and Thr257. Lys465 lines the (6S)-5-formyl-5,6,7,8-tetrahydrofolate pocket.

The protein belongs to the TRAFAC class TrmE-Era-EngA-EngB-Septin-like GTPase superfamily. TrmE GTPase family. Homodimer. Heterotetramer of two MnmE and two MnmG subunits. K(+) is required as a cofactor.

The protein localises to the cytoplasm. In terms of biological role, exhibits a very high intrinsic GTPase hydrolysis rate. Involved in the addition of a carboxymethylaminomethyl (cmnm) group at the wobble position (U34) of certain tRNAs, forming tRNA-cmnm(5)s(2)U34. The chain is tRNA modification GTPase MnmE from Rhodopirellula baltica (strain DSM 10527 / NCIMB 13988 / SH1).